The following is a 263-amino-acid chain: Type II restriction enzyme TthHB8I (263 aa).

The enzyme catalyses Endonucleolytic cleavage of DNA to give specific double-stranded fragments with terminal 5'-phosphates.. Its function is as follows. A P subtype restriction enzyme that recognizes the double-stranded sequence 5'-TCGA-3' and cleaves after T-1. This is Type II restriction enzyme TthHB8I (tthHB8IR) from Thermus thermophilus (strain ATCC 27634 / DSM 579 / HB8).